The primary structure comprises 117 residues: UPF0342 protein LEUM_1212 (117 aa).

The protein belongs to the UPF0342 family.

The sequence is that of UPF0342 protein LEUM_1212 from Leuconostoc mesenteroides subsp. mesenteroides (strain ATCC 8293 / DSM 20343 / BCRC 11652 / CCM 1803 / JCM 6124 / NCDO 523 / NBRC 100496 / NCIMB 8023 / NCTC 12954 / NRRL B-1118 / 37Y).